A 281-amino-acid polypeptide reads, in one-letter code: Arylamine N-acetyltransferase (281 aa).

Residue C69 is the Acyl-thioester intermediate of the active site. Catalysis depends on residues H107 and D122. K214 and K281 each carry N6-acetyllysine.

Belongs to the arylamine N-acetyltransferase family. In terms of assembly, homodimer. Acetylated on Lys-214 and Lys-281. Deacetylated by CobB.

It is found in the cytoplasm. It carries out the reaction an arylamine + acetyl-CoA = an N-acetylarylamine + CoA. The enzyme catalyses an N-hydroxyarylamine + acetyl-CoA = an N-acetoxyarylamine + CoA. Its activity is regulated as follows. Inhibited by salicylic acid, acetylsalicylic acid, 2,6-dichrolo-4-nitrophenol, N-ethylmaleimide and iodoacetamide. Its function is as follows. Catalyzes the acetyl-CoA-dependent N-acetylation of aromatic amines, and, probably, the O-acetylation of N-hydroxyarylamines. In vitro, catalyzes the N-acetylation of various arylamines such as aminobenzoic acid, aminophenol, aminotoluene, phenetidine, anisidine, aniline, isoniazid and 2-amino-fluorene. N-hydroxyarylamine O-acetyltransferase activity has not been assayed directly, however, NhoA activity is required for the mutagenicity of nitroaromatic compounds, suggesting that it also has O-acetyltransferase activity. The protein is Arylamine N-acetyltransferase (nhoA) of Escherichia coli (strain K12).